The sequence spans 342 residues: Tetraacyldisaccharide 4'-kinase (342 aa).

Residue Thr56–Thr63 participates in ATP binding.

It belongs to the LpxK family.

The catalysed reaction is a lipid A disaccharide + ATP = a lipid IVA + ADP + H(+). The protein operates within glycolipid biosynthesis; lipid IV(A) biosynthesis; lipid IV(A) from (3R)-3-hydroxytetradecanoyl-[acyl-carrier-protein] and UDP-N-acetyl-alpha-D-glucosamine: step 6/6. Functionally, transfers the gamma-phosphate of ATP to the 4'-position of a tetraacyldisaccharide 1-phosphate intermediate (termed DS-1-P) to form tetraacyldisaccharide 1,4'-bis-phosphate (lipid IVA). This chain is Tetraacyldisaccharide 4'-kinase, found in Parvibaculum lavamentivorans (strain DS-1 / DSM 13023 / NCIMB 13966).